The primary structure comprises 210 residues: Replication protein RepB (210 aa).

The protein belongs to the Gram-positive plasmids replication protein type 2 family.

In terms of biological role, is essential for plasmid replication. Nicks the positive strand at the plus origin of replication. This Streptococcus agalactiae protein is Replication protein RepB (repB).